A 177-amino-acid chain; its full sequence is Flavodoxin (177 aa).

Positions 4-173 (IGIFFGSDTG…RIDTWLDKLK (170 aa)) constitute a Flavodoxin-like domain.

Belongs to the flavodoxin family. FMN serves as cofactor.

Its function is as follows. Low-potential electron donor to a number of redox enzymes. NifF is the electron donor to nitrogenase. This is Flavodoxin (nifF) from Enterobacter agglomerans (Erwinia herbicola).